The chain runs to 384 residues: Spermidine/putrescine import ATP-binding protein PotA (384 aa).

The ABC transporter domain occupies 6–238 (ITFNNVSKTF…PINHFVANFI (233 aa)). 40–47 (GASGSGKS) lines the ATP pocket.

This sequence belongs to the ABC transporter superfamily. Spermidine/putrescine importer (TC 3.A.1.11.1) family. In terms of assembly, the complex is composed of two ATP-binding proteins (PotA), two transmembrane proteins (PotB and PotC) and a solute-binding protein (PotD).

It localises to the cell membrane. The catalysed reaction is ATP + H2O + polyamine-[polyamine-binding protein]Side 1 = ADP + phosphate + polyamineSide 2 + [polyamine-binding protein]Side 1.. Part of the ABC transporter complex PotABCD involved in spermidine/putrescine import. Responsible for energy coupling to the transport system. This is Spermidine/putrescine import ATP-binding protein PotA from Streptococcus pyogenes serotype M18 (strain MGAS8232).